The sequence spans 248 residues: tRNA pseudouridine synthase A (248 aa).

The Nucleophile role is filled by Asp-53. Residue Tyr-116 participates in substrate binding.

This sequence belongs to the tRNA pseudouridine synthase TruA family. In terms of assembly, homodimer.

The catalysed reaction is uridine(38/39/40) in tRNA = pseudouridine(38/39/40) in tRNA. In terms of biological role, formation of pseudouridine at positions 38, 39 and 40 in the anticodon stem and loop of transfer RNAs. This Helicobacter hepaticus (strain ATCC 51449 / 3B1) protein is tRNA pseudouridine synthase A.